The primary structure comprises 75 residues: Phi-liotoxin-Lw1a (75 aa).

A signal peptide spans M1–G25. Positions D26–R39 are excised as a propeptide. 2 disulfide bridges follow: C50–C62 and C56–C68.

In terms of tissue distribution, expressed by the venom gland.

The protein resides in the secreted. In terms of biological role, affects the activity of both ryanodine-sensitive calcium-release channels RyR1 and RyR2 with high potency. At lower concentrations the toxin increases full openings of the RyRs, and at higher concentrations it inhibits full openings and induce openings to subconductance levels and reduces the number of full conductance openings. The different actions may be attributed to the toxins binding at different sites on the RyRs, with binding at a high-affinity site mediating the increase in full openings and the induction of subconductance states evoked upon binding to a lower-affinity site. Insect-selective toxin that provokes a dose-dependent contractile paralysis in crickets and blowfly larvae, followed by death. The sequence is that of Phi-liotoxin-Lw1a from Hormurus waigiensis (Australian rainforest scorpion).